A 580-amino-acid chain; its full sequence is Negative elongation factor B (580 aa).

Lys519 is subject to N6-acetyllysine. The tract at residues 548–580 (LEQLDHRKPSPAQAAETPALELPLPSVPAPAPL) is disordered. A Phosphoserine modification is found at Ser557.

It belongs to the NELF-B family. In terms of assembly, the NELF complex is composed of NELFA, NELFB, NELFCD (isoform NELF-C or isoform NELF-D) and NELFE; the N-terminus of NELFB binds to the NELFA:NELFCD subcomplex. Binds RNA which may help to stabilize the NELF complex on nucleic acid. Interacts with the first BRCT repeat of BRCA1. Interacts with KIAA1191. Interacts with NELFE. As to expression, widely expressed. Expressed in heart, brain, lung, placenta, liver, skeletal muscle, kidney and pancreas.

The protein localises to the nucleus. In terms of biological role, essential component of the NELF complex, a complex that negatively regulates the elongation of transcription by RNA polymerase II. The NELF complex, which acts via an association with the DSIF complex and causes transcriptional pausing, is counteracted by the P-TEFb kinase complex. May be able to induce chromatin unfolding. Essential for early embryogenesis; plays an important role in maintaining the undifferentiated state of embryonic stem cells (ESCs) by preventing unscheduled expression of developmental genes. Plays a key role in establishing the responsiveness of stem cells to developmental cues; facilitates plasticity and cell fate commitment in ESCs by establishing the appropriate expression level of signaling molecules. Supports the transcription of genes involved in energy metabolism in cardiomyocytes; facilitates the association of transcription initiation factors with the promoters of the metabolism-related genes. Its function is as follows. (Microbial infection) The NELF complex is involved in HIV-1 latency possibly involving recruitment of PCF11 to paused RNA polymerase II. In vitro, binds weakly to the HIV-1 TAR RNA which is located in the long terminal repeat (LTR) of HIV-1. This is Negative elongation factor B (NELFB) from Homo sapiens (Human).